The sequence spans 479 residues: Auxin transporter-like protein 1 (479 aa).

Residues 1-58 lie on the Cytoplasmic side of the membrane; that stretch reads MLSEKQGEETMMSSLNETIELNEEREEEKGASPGSGFKNFLWHGGSVYDAWFSCASNQ. A helical membrane pass occupies residues 59-76; that stretch reads VAQVLLTLPYSFSQLGMI. At 77–78 the chain is on the extracellular side; it reads SG. The helical transmembrane segment at 79-99 threads the bilayer; that stretch reads IIFQVFYGLMGSWTAYLISIL. Topologically, residues 100–134 are cytoplasmic; that stretch reads YVEYRSRKEKENVSFKNHVIQWFEVLEGLLGPYWK. A helical transmembrane segment spans residues 135–155; it reads AIGLAFNCTFLLFGSVIQLIA. Over 156 to 171 the chain is Extracellular; the sequence is CASNIYYINDHLDKRT. A helical membrane pass occupies residues 172-192; it reads WTYIFGACCATTVFIPSFHNY. At 193–195 the chain is on the cytoplasmic side; sequence RIW. The helical transmembrane segment at 196–216 threads the bilayer; sequence SFLGLGMTTYTAWYMTIAAIV. Over 217 to 231 the chain is Extracellular; that stretch reads HGQVENVVHSGPKKM. A helical membrane pass occupies residues 232-252; it reads VWYFTGATNILYTFGGHAVTV. Over 253–265 the chain is Cytoplasmic; it reads EIMHAMWKPQKFK. Residues 266 to 286 form a helical membrane-spanning segment; the sequence is AIYFFATLYVFTLTLPSAIAV. The Extracellular portion of the chain corresponds to 287–313; sequence YWAFGDQLLDHSNAFSLLPRNAWRDAG. The chain crosses the membrane as a helical span at residues 314-334; it reads VILMLIHQFITFGFACTPLYF. Topologically, residues 335–355 are cytoplasmic; sequence VWEKVIGMHDTKSIFLRALAR. Residues 356–376 traverse the membrane as a helical segment; the sequence is LPVVIPIWFLAIIFPFFGPIN. A topological domain (extracellular) is located at residue serine 377. Residues 378-398 form a helical membrane-spanning segment; the sequence is AVGALLVSFTVYVIPASAHML. Residues 399–421 lie on the Cytoplasmic side of the membrane; the sequence is TYRSASARQNAAEKLPKVIPSWT. A helical membrane pass occupies residues 422–442; it reads LMYVINAFVVIWVTIVGFGFG. Residues 443-479 lie on the Extracellular side of the membrane; it reads GWASMTNFIKQVDTFGLFAKCYQCPPKLPASNHTMHH. N-linked (GlcNAc...) asparagine glycosylation is present at asparagine 474.

Belongs to the amino acid/polyamine transporter 2 family. Amino acid/auxin permease (AAAP) (TC 2.A.18.1) subfamily. As to expression, shoots and roots of nodulating plants. Higher levels in roots, flowers and stems, lower in nodules, leaves, petioles and shoot apices.

The protein resides in the cell membrane. Functionally, carrier protein involved in proton-driven auxin influx. Mediates the formation of auxin gradient from developing leaves (site of auxin biosynthesis) to tips by contributing to the loading of auxin in vascular tissues and facilitating acropetal (base to tip) auxin transport within inner tissues of the root apex, and basipetal (tip to base) auxin transport within outer tissues of the root apex. May be involved in lateral roots and nodules formation. This Medicago truncatula (Barrel medic) protein is Auxin transporter-like protein 1 (LAX1).